The sequence spans 98 residues: NADH-ubiquinone oxidoreductase chain 4L (98 aa).

3 consecutive transmembrane segments (helical) span residues 1–21 (MTPTYMNIMLAFTISLLGMLT), 29–49 (SLLCLEGMMMSLFIMTTLIAL), and 61–81 (IILLVFAACEAAVGLALLVSI).

This sequence belongs to the complex I subunit 4L family. In terms of assembly, core subunit of respiratory chain NADH dehydrogenase (Complex I) which is composed of 45 different subunits.

It is found in the mitochondrion inner membrane. The catalysed reaction is a ubiquinone + NADH + 5 H(+)(in) = a ubiquinol + NAD(+) + 4 H(+)(out). Functionally, core subunit of the mitochondrial membrane respiratory chain NADH dehydrogenase (Complex I) which catalyzes electron transfer from NADH through the respiratory chain, using ubiquinone as an electron acceptor. Part of the enzyme membrane arm which is embedded in the lipid bilayer and involved in proton translocation. This is NADH-ubiquinone oxidoreductase chain 4L (MT-ND4L) from Macaca pagensis (Mentawai macaque).